We begin with the raw amino-acid sequence, 366 residues long: Chorismate synthase (366 aa).

NADP(+)-binding residues include R48 and R54. FMN contacts are provided by residues 125 to 127 (RSS), 238 to 239 (NA), G278, 293 to 297 (KPTSS), and R319.

It belongs to the chorismate synthase family. Homotetramer. FMNH2 serves as cofactor.

It catalyses the reaction 5-O-(1-carboxyvinyl)-3-phosphoshikimate = chorismate + phosphate. Its pathway is metabolic intermediate biosynthesis; chorismate biosynthesis; chorismate from D-erythrose 4-phosphate and phosphoenolpyruvate: step 7/7. Its function is as follows. Catalyzes the anti-1,4-elimination of the C-3 phosphate and the C-6 proR hydrogen from 5-enolpyruvylshikimate-3-phosphate (EPSP) to yield chorismate, which is the branch point compound that serves as the starting substrate for the three terminal pathways of aromatic amino acid biosynthesis. This reaction introduces a second double bond into the aromatic ring system. The chain is Chorismate synthase from Neisseria gonorrhoeae (strain ATCC 700825 / FA 1090).